Consider the following 384-residue polypeptide: Trophoblast glycoprotein-like (384 aa).

The first 30 residues, 1–30, serve as a signal peptide directing secretion; it reads MAPRAGQRGLWSPLPGLLLLAAALSRPAAP. Disulfide bonds link cysteine 31-cysteine 37 and cysteine 35-cysteine 47. At 31–309 the chain is on the extracellular side; it reads CPFQCYCFGS…DVAGPELEAS (279 aa). 5 LRR repeats span residues 61–84, 95–118, 119–142, 173–196, and 198–219; these read PPDA…AFAG, LPLL…AFDG, LPSL…AFRG, LAEL…ALRL, and RLEQ…ELSA. Asparagine 66 is a glycosylation site (N-linked (GlcNAc...) asparagine). 2 cysteine pairs are disulfide-bonded: cysteine 240–cysteine 266 and cysteine 242–cysteine 287. The helical transmembrane segment at 310-330 threads the bilayer; the sequence is YVFFGLVLALIGLIFLMVLYL. At 331 to 384 the chain is on the cytoplasmic side; that stretch reads NRRGIQRWMHNLREACRDQMEGYHYRYEQDADPRRAPAPAAPAGSRATSPGSGL. Residues 361-384 form a disordered region; sequence ADPRRAPAPAAPAGSRATSPGSGL. The segment covering 367–384 has biased composition (low complexity); the sequence is PAPAAPAGSRATSPGSGL.

It localises to the membrane. The polypeptide is Trophoblast glycoprotein-like (Tpbgl) (Mus musculus (Mouse)).